We begin with the raw amino-acid sequence, 506 residues long: Pleckstrin homology domain-containing family D member 1 (506 aa).

The PH domain maps to Lys28 to Lys136. A coiled-coil region spans residues Glu146–Arg391. Arg503 is modified (omega-N-methylarginine).

Belongs to the PLEKHD1 family.

The polypeptide is Pleckstrin homology domain-containing family D member 1 (PLEKHD1) (Homo sapiens (Human)).